An 837-amino-acid polypeptide reads, in one-letter code: Vacuolar membrane protease (837 aa).

At 1–36 (MSEEEVHDTSSEASEVFTNQPNAFVRGVRSIFGYRK) the chain is on the cytoplasmic side. The chain crosses the membrane as a helical span at residues 37–57 (TSLTLFVILTIVVTAGLSFYD). The Vacuolar segment spans residues 58–355 (NSLELTIELP…FATPISALAR (298 aa)). The N-linked (GlcNAc...) asparagine glycan is linked to asparagine 143. 2 residues coordinate Zn(2+): histidine 157 and aspartate 169. The Proton acceptor role is filled by glutamate 201. Residues glutamate 202, glutamate 227, and histidine 299 each coordinate Zn(2+). A helical transmembrane segment spans residues 356–376 (VNLVLLVLFPVVSTPLLFVIV). The Cytoplasmic portion of the chain corresponds to 377–384 (KYKKWKLR). Residues 385–405 (VTNFLGVPLAMGLAVAVGQVG) traverse the membrane as a helical segment. Over 406 to 415 (NPMLVSSHPM) the chain is Vacuolar. A helical transmembrane segment spans residues 416 to 436 (MVVATTTSIVVLVYYVVLNGV). Residues 437 to 446 (DWVNTSSDQK) are Cytoplasmic-facing. The helical transmembrane segment at 447–467 (LVTMIEVSFVYWVVLVYVTWS) threads the bilayer. Residues 468–474 (GGDHTGE) are Vacuolar-facing. A helical membrane pass occupies residues 475-495 (FGVTVLFFVQASTSLLGLIGW). Residues 496-539 (TFTRVRGGDEPLLSGEEERYGTEDERDTEKPLVEHNYDWSLQYL) are Cytoplasmic-facing. A helical membrane pass occupies residues 540–560 (LIVPVSSLVVYNSGWLVLEGV). Asparagine 561 is a glycosylation site (N-linked (GlcNAc...) asparagine). Residues 561 to 572 (NKTVQESLASEH) are Vacuolar-facing. Residues 573-593 (LIYWIVVVFSQFLVLPVVPFI) traverse the membrane as a helical segment. The Cytoplasmic segment spans residues 594 to 598 (TKFNR). Residues 599–619 (YIVLGLSVVAVVGVLMSMAVH) form a helical membrane-spanning segment. The Vacuolar segment spans residues 620-837 (PFNQGSPMKL…LVGVVKHVDV (218 aa)). An N-linked (GlcNAc...) asparagine glycan is attached at asparagine 689.

The protein belongs to the peptidase M28 family. Requires Zn(2+) as cofactor.

The protein localises to the vacuole membrane. Functionally, may be involved in vacuolar sorting and osmoregulation. In Candida albicans (strain WO-1) (Yeast), this protein is Vacuolar membrane protease.